The primary structure comprises 302 residues: 4-hydroxy-tetrahydrodipicolinate synthase (302 aa).

Residue threonine 55 participates in pyruvate binding. The active-site Proton donor/acceptor is tyrosine 144. Lysine 172 acts as the Schiff-base intermediate with substrate in catalysis. Position 214 (valine 214) interacts with pyruvate.

Belongs to the DapA family. In terms of assembly, homotetramer; dimer of dimers.

The protein resides in the cytoplasm. It catalyses the reaction L-aspartate 4-semialdehyde + pyruvate = (2S,4S)-4-hydroxy-2,3,4,5-tetrahydrodipicolinate + H2O + H(+). The protein operates within amino-acid biosynthesis; L-lysine biosynthesis via DAP pathway; (S)-tetrahydrodipicolinate from L-aspartate: step 3/4. Functionally, catalyzes the condensation of (S)-aspartate-beta-semialdehyde [(S)-ASA] and pyruvate to 4-hydroxy-tetrahydrodipicolinate (HTPA). This is 4-hydroxy-tetrahydrodipicolinate synthase from Synechococcus sp. (strain CC9311).